The chain runs to 601 residues: Serine/threonine-protein phosphatase 2A 65 kDa regulatory subunit A beta isoform (601 aa).

A2 carries the N-acetylalanine modification. 15 HEAT repeats span residues 20–58 (DSLYPIAVLIDELRNEDVQLRLNSIKKLSTIALALGVER), 59–96 (TRTELLPFLTDTIYDEDEVLLALAEQLGNFTGLVGGPD), 97–135 (FAHCLLPPLESLATVEETVVRDKAVESLRQISQEHTPVA), 136–173 (LEAHFVPLVKRLASGDWFTSRTSACGLFSVCYPRASNA), 174–212 (VKAEIRQHFRSLCSDDTPMVRRAAASKLGEFAKVLELDS), 213–251 (VKTEIVPLFTNLASDEQDSVRLLAVEACVSIAQLLSQED), 252–290 (LEALVMPTLRQAAEDKSWRVRYMVADKFSELQKAVGPKI), 291–333 (ALSD…RETV), 334–372 (IMNQILPYIKELVSDTNQHVKSALASVIMGLSTVLGKEN), 373–411 (TIEHLLPLFLAQLKDECPEVRLNIISNLDCVNEVIGIRQ), 412–450 (LSQSLLPAIVELAEDAKWRVRLAIIEYMPLLAGQLGVEF), 451–489 (FDEKLNSLCMAWLVDHVYAIREAATNNLMKLVQKFGTEW), 490–528 (AQNTIVPKVLVMANDPNYLHRMTTLFCINALSEACGKEI), 529–567 (TTKQMLPIVLKMAGDQVANVRFNVAKSLQKIGPILDTNA), and 568–601 (LQGEVKPVLQKLGQDEDMDVKYFAQEAISVLALA).

Belongs to the phosphatase 2A regulatory subunit A family. PP2A consists of a common heterodimeric core enzyme, composed of a 36 kDa catalytic subunit (subunit C) and a 65 kDa constant regulatory subunit (PR65 or subunit A), that associates with a variety of regulatory subunits. Proteins that associate with the core dimer include three families of regulatory subunits B (the R2/B/PR55/B55, R3/B''/PR72/PR130/PR59 and R5/B'/B56 families), the 48 kDa variable regulatory subunit, viral proteins, and cell signaling molecules. Interacts with IPO9. Interacts with SGO1. Interacts with RAF1.

Functionally, the PR65 subunit of protein phosphatase 2A serves as a scaffolding molecule to coordinate the assembly of the catalytic subunit and a variable regulatory B subunit. The chain is Serine/threonine-protein phosphatase 2A 65 kDa regulatory subunit A beta isoform (Ppp2r1b) from Mus musculus (Mouse).